We begin with the raw amino-acid sequence, 141 residues long: Large-conductance mechanosensitive channel (141 aa).

3 consecutive transmembrane segments (helical) span residues 14-34 (VVDLAVGVIIGAAFGAIVNSL), 38-58 (VIMPIIGAVTGGLDFSNYYIP), and 82-102 (GQFLTLAVNFTIIAFVLFMVI).

The protein belongs to the MscL family. In terms of assembly, homopentamer.

The protein resides in the cell inner membrane. Channel that opens in response to stretch forces in the membrane lipid bilayer. May participate in the regulation of osmotic pressure changes within the cell. The chain is Large-conductance mechanosensitive channel from Methylorubrum extorquens (strain CM4 / NCIMB 13688) (Methylobacterium extorquens).